The chain runs to 600 residues: Nisin transport ATP-binding protein NisT (600 aa).

5 helical membrane passes run 34-54, 69-89, 147-167, 168-188, and 260-280; these read AIYL…SLFI, LINI…LGQL, AIIV…FIGT, WNIG…VLFL, and IFLD…MILS. Residues 34-317 enclose the ABC transmembrane type-1 domain; sequence AIYLIVLNAI…MIQNIYIIYN (284 aa). Residues 352–592 enclose the ABC transporter domain; it reads VKVINLSYVY…CQYYQELYYS (241 aa). 386-393 contacts ATP; it reads GKNGSGKS.

Belongs to the ABC transporter superfamily. Nisin exporter (TC 3.A.1.111.3) family.

It localises to the cell membrane. Its function is as follows. Probably implicated in the export process of the lantibiotic nisin. This Lactococcus lactis subsp. lactis (Streptococcus lactis) protein is Nisin transport ATP-binding protein NisT (nisT).